The chain runs to 457 residues: Peptidyl-prolyl cis-trans isomerase FKBP5 (457 aa).

An N-acetylmethionine modification is found at Met1. A compositionally biased stretch (basic and acidic residues) spans 1–11 (MTTDEGAKSSR). The disordered stretch occupies residues 1–28 (MTTDEGAKSSRENPAATVAEQGEDVTSK). Lys28 carries the N6-acetyllysine modification. PPIase FKBP-type domains follow at residues 50–138 (GDKV…LNFK) and 165–251 (GARV…KSFE). TPR repeat units follow at residues 268-301 (AAIV…LEME), 317-350 (LAAF…DSAN), and 351-384 (EKGL…NPQN). The disordered stretch occupies residues 424-457 (EANKAVSKKTSEGVTNEKLTVSHAVEEEKPEGHV). A Phosphoserine modification is found at Ser445. The span at 447–457 (AVEEEKPEGHV) shows a compositional bias: basic and acidic residues.

Part of a heteromultimeric cytoplasmic complex with HSP90AA1, HSPA1A/HSPA1B and steroid receptors. Upon ligand binding dissociates from the complex and FKBP4 takes its place. Interacts with functionally mature heterooligomeric progesterone receptor complexes along with HSP90 and TEBP. Interacts with NR3C1. Interacts with Akt/AKT1 and PHLPP1; enhancing dephosphorylation and subsequent activation of Akt/AKT1. Interacts with IFI44L; this interaction modulates the kinase activity of IKBKB and IKBKE. Interacts with IKBKB and IKBKE. Post-translationally, acetylation impairs ability to promote interaction between Akt/AKT1 and PHLPP1. Deacetylation by SIRT7 promotes interaction between Akt/AKT1 and PHLPP1, leading to suppress Akt/AKT1 activation. In terms of processing, ubiquitinated, leading to degradation in a proteasome-dependent manner. Deubiquitinated by USP49, leading to stabilization.

The protein localises to the cytoplasm. It localises to the nucleus. It catalyses the reaction [protein]-peptidylproline (omega=180) = [protein]-peptidylproline (omega=0). Inhibited by both FK506 and rapamycin. Functionally, immunophilin protein with PPIase and co-chaperone activities. Component of unligated steroid receptors heterocomplexes through interaction with heat-shock protein 90 (HSP90). Plays a role in the intracellular trafficking of heterooligomeric forms of steroid hormone receptors maintaining the complex into the cytoplasm when unliganded. Acts as a regulator of Akt/AKT1 activity by promoting the interaction between Akt/AKT1 and PHLPP1, thereby enhancing dephosphorylation and subsequent activation of Akt/AKT1. Interacts with IKBKE and IKBKB which facilitates IKK complex assembly leading to increased IKBKE and IKBKB kinase activity, NF-kappaB activation, and IFN production. This chain is Peptidyl-prolyl cis-trans isomerase FKBP5 (FKBP5), found in Saguinus oedipus (Cotton-top tamarin).